Consider the following 252-residue polypeptide: Centromere protein V (252 aa).

A disordered region spans residues 1 to 80; sequence MRRTRSAVAT…EEPPPAVTPA (80 aa). Phosphoserine is present on serine 18. Residue arginine 39 is modified to Omega-N-methylarginine. The span at 54–64 shows a compositional bias: pro residues; that stretch reads SAKPRPKPPPR. At threonine 78 the chain carries Phosphothreonine. In terms of domain architecture, CENP-V/GFA spans 125–237; that stretch reads HTGGCHCGAV…TEEFNGSDWE (113 aa). The Zn(2+) site is built by cysteine 129, cysteine 131, cysteine 149, cysteine 151, cysteine 154, cysteine 193, and cysteine 196. Residue serine 234 is modified to Phosphoserine.

It belongs to the Gfa family. Requires Zn(2+) as cofactor.

Its subcellular location is the chromosome. The protein localises to the centromere. It is found in the kinetochore. The protein resides in the nucleus. It localises to the cytoplasm. Its subcellular location is the cytoskeleton. The protein localises to the spindle. Required for distribution of pericentromeric heterochromatin in interphase nuclei and for centromere formation and organization, chromosome alignment and cytokinesis. The chain is Centromere protein V (Cenpv) from Mus musculus (Mouse).